The chain runs to 927 residues: DNA polymerase alpha-binding protein (927 aa).

WD repeat units follow at residues 10-49 (FDFG…EEPE), 134-173 (KIDE…PNKV), 227-266 (AANR…LQKT), and 273-313 (STKA…IHYT). Phosphoserine occurs at positions 377, 379, and 398. A phosphothreonine mark is found at Thr-401 and Thr-411. Residue Ser-463 is modified to Phosphoserine. A WD 5 repeat occupies 699-739 (GSDNTLLLLSKWRSPEESKWLPILDSNMEIWKMSGGKETTD).

It is found in the nucleus. Accessory factor for DNA replication. It plays a role in accurately duplicating the genome in vivo. In Saccharomyces cerevisiae (strain ATCC 204508 / S288c) (Baker's yeast), this protein is DNA polymerase alpha-binding protein (CTF4).